A 250-amino-acid chain; its full sequence is Putative (5-formylfuran-3-yl)methyl phosphate synthase (250 aa).

Catalysis depends on Lys-29, which acts as the Schiff-base intermediate with substrate. Catalysis depends on Lys-87, which acts as the Proton acceptor.

The protein belongs to the MfnB family.

It catalyses the reaction 2 D-glyceraldehyde 3-phosphate = 4-(hydroxymethyl)-2-furancarboxaldehyde phosphate + phosphate + 2 H2O. Its function is as follows. Catalyzes the formation of 4-(hydroxymethyl)-2-furancarboxaldehyde phosphate (4-HFC-P) from two molecules of glyceraldehyde-3-P (GA-3-P). The chain is Putative (5-formylfuran-3-yl)methyl phosphate synthase from Streptomyces griseus subsp. griseus (strain JCM 4626 / CBS 651.72 / NBRC 13350 / KCC S-0626 / ISP 5235).